Reading from the N-terminus, the 621-residue chain is UvrABC system protein C (621 aa).

The GIY-YIG domain maps to 20-98 (MAPGVYCMYA…IKSLAPRYNV (79 aa)). The UVR domain maps to 207-242 (DLLAEELIQAMQVASEHLEFEQAARLRDLLTSLRSM).

This sequence belongs to the UvrC family. Interacts with UvrB in an incision complex.

It localises to the cytoplasm. Functionally, the UvrABC repair system catalyzes the recognition and processing of DNA lesions. UvrC both incises the 5' and 3' sides of the lesion. The N-terminal half is responsible for the 3' incision and the C-terminal half is responsible for the 5' incision. In Xylella fastidiosa (strain 9a5c), this protein is UvrABC system protein C.